The sequence spans 626 residues: Dynein, cytoplasmic 1, intermediate chain 2a (626 aa).

A compositionally biased stretch (basic and acidic residues) spans 20–43; that stretch reads QIREEKKRKEEERKKKEAELKKDA. Disordered stretches follow at residues 20 to 108 and 142 to 197; these read QIRE…RTLH and KEVV…HELT. A compositionally biased stretch (polar residues) spans 82–99; that stretch reads TAKSVGSPSEAGSQDSGD. Residues 160 to 169 show a composition bias toward acidic residues; that stretch reads KDEEDEEEET. Residues 177–197 show a composition bias toward basic and acidic residues; that stretch reads ETEKEKPEEKQVEEALPHELT. WD repeat units follow at residues 265-314, 318-358, 367-408, 417-457, 462-507, 510-550, and 556-595; these read SKQR…ATPE, HCQS…RTPV, AHTH…QPQD, SKSV…AGIS, GHHG…PLYS, DNSD…EVPT, and DGSPALNRLRWSQSGREIAVGDSEGQIHIYDVGEQIAVPR.

This sequence belongs to the dynein intermediate chain family. As to quaternary structure, homodimer. The cytoplasmic dynein 1 complex consists of two catalytic heavy chains (HCs) and a number of non-catalytic subunits presented by intermediate chains (ICs), light intermediate chains (LICs) and light chains (LCs); the composition seems to vary in respect to the IC, LIC and LC composition. The heavy chain homodimer serves as a scaffold for the probable homodimeric assembly of the respective non-catalytic subunits. The ICs and LICs bind directly to the HC dimer and the LCs assemble on the IC dimer.

The protein resides in the cytoplasm. It is found in the cytoskeleton. In terms of biological role, acts as one of several non-catalytic accessory components of the cytoplasmic dynein 1 complex that are thought to be involved in linking dynein to cargos and to adapter proteins that regulate dynein function. Cytoplasmic dynein 1 acts as a motor for the intracellular retrograde motility of vesicles and organelles along microtubules. Plays a role in the development of anterior brain and cartilaginous structures. The protein is Dynein, cytoplasmic 1, intermediate chain 2a (dync1i2a) of Danio rerio (Zebrafish).